A 174-amino-acid polypeptide reads, in one-letter code: Nicotinamide-nucleotide adenylyltransferase (174 aa).

This sequence belongs to the archaeal NMN adenylyltransferase family.

Its subcellular location is the cytoplasm. The catalysed reaction is beta-nicotinamide D-ribonucleotide + ATP + H(+) = diphosphate + NAD(+). It functions in the pathway cofactor biosynthesis; NAD(+) biosynthesis; NAD(+) from nicotinamide D-ribonucleotide: step 1/1. The polypeptide is Nicotinamide-nucleotide adenylyltransferase (Archaeoglobus fulgidus (strain ATCC 49558 / DSM 4304 / JCM 9628 / NBRC 100126 / VC-16)).